Here is a 383-residue protein sequence, read N- to C-terminus: 8-amino-7-oxononanoate synthase (383 aa).

Arg-21 contacts substrate. 108 to 109 contacts pyridoxal 5'-phosphate; sequence GY. Residue His-133 participates in substrate binding. 3 residues coordinate pyridoxal 5'-phosphate: Ser-179, His-207, and Thr-233. Position 236 is an N6-(pyridoxal phosphate)lysine (Lys-236). Substrate is bound at residue Thr-350.

The protein belongs to the class-II pyridoxal-phosphate-dependent aminotransferase family. BioF subfamily. In terms of assembly, homodimer. Pyridoxal 5'-phosphate serves as cofactor.

The enzyme catalyses 6-carboxyhexanoyl-[ACP] + L-alanine + H(+) = (8S)-8-amino-7-oxononanoate + holo-[ACP] + CO2. It functions in the pathway cofactor biosynthesis; biotin biosynthesis. In terms of biological role, catalyzes the decarboxylative condensation of pimeloyl-[acyl-carrier protein] and L-alanine to produce 8-amino-7-oxononanoate (AON), [acyl-carrier protein], and carbon dioxide. The sequence is that of 8-amino-7-oxononanoate synthase from Serratia proteamaculans (strain 568).